Consider the following 220-residue polypeptide: Protein US2 homolog (220 aa).

The protein belongs to the herpesviridae US2 family.

The chain is Protein US2 homolog from Bovine herpesvirus 1.2 (strain ST) (BoHV-1).